Consider the following 228-residue polypeptide: MEMERINANTIRVMLGNDDLAQRGITVLDLLGNHKQIESFFYSILDEVDKDHTFATNEAVTFQVMPSQSGLELLISKSGQKNDDSAADQTDDEGTDTQVPDYIRQQLQGLDASDQQDHQAVDEGGYIDADKAPQTELVLKLKDFEDFISLADTLRLEGGKSDLYRYKNAYYLVLTFYPNEISSDEAHDQMAVAMEFGDRSPLSSAVLSEYGKRLMETSALETARYYFK.

This sequence belongs to the MecA family. In terms of assembly, homodimer.

Enables the recognition and targeting of unfolded and aggregated proteins to the ClpC protease or to other proteins involved in proteolysis. The protein is Adapter protein MecA of Lacticaseibacillus paracasei (strain ATCC 334 / BCRC 17002 / CCUG 31169 / CIP 107868 / KCTC 3260 / NRRL B-441) (Lactobacillus paracasei).